The sequence spans 367 residues: MVPTEATSLILNPSDDYGYDGTPPMEYDTNLTDYFCEKSHVRQFAGHFLPPLYWLVFIVGAVGNSLVILVYWYCTRVKTMTDMFLLNLAIADLLFLTTLPFWAIAAADQWKFQTFMCKVVNSMYKMNFYSCVLLIMCISVDRYIAIAQAMRAQMWRQKRLLYSKMVCFTIWVMAAALCLPELLYSQVKEEHGTAICTVVYSSNESTKLKSAVLTLKVTLGFFLPFVVMACCYAIIIHTLIRAKKSSKHKALKVTITVLTVFVLSQFPHNCVLLVQTIDAYATFISSCALSIKIDICFQVTQTVAFFHSCLNPVLYVFVGERFRRDLVKTLKNLGCISQAQWVSFTRREGSLKLSSMLLETTSGALSF.

Residues methionine 1–glycine 46 are Extracellular-facing. Residue asparagine 30 is glycosylated (N-linked (GlcNAc...) asparagine). Disulfide bonds link cysteine 36–cysteine 287 and cysteine 117–cysteine 196. Residues histidine 47–tryptophan 72 traverse the membrane as a helical segment. The Cytoplasmic portion of the chain corresponds to tyrosine 73–methionine 83. Residues phenylalanine 84–alanine 107 form a helical membrane-spanning segment. Residues aspartate 108–lysine 118 are Extracellular-facing. The chain crosses the membrane as a helical span at residues valine 119–glutamine 148. The Cytoplasmic segment spans residues alanine 149–glutamine 157. The chain crosses the membrane as a helical span at residues lysine 158 to leucine 183. At tyrosine 184–threonine 206 the chain is on the extracellular side. The N-linked (GlcNAc...) asparagine glycan is linked to asparagine 203. The chain crosses the membrane as a helical span at residues lysine 207–arginine 241. The Cytoplasmic portion of the chain corresponds to alanine 242–serine 246. Residues lysine 247–alanine 281 form a helical membrane-spanning segment. The Extracellular portion of the chain corresponds to threonine 282 to alanine 288. Residues leucine 289 to glycine 319 form a helical membrane-spanning segment. Topologically, residues glutamate 320–phenylalanine 367 are cytoplasmic.

Belongs to the G-protein coupled receptor 1 family.

It localises to the cell membrane. Functionally, receptor for chemokine SCYA25/TECK. Subsequently transduces a signal by increasing the intracellular calcium ions level. The polypeptide is C-C chemokine receptor type 9 (CCR9) (Ovis aries (Sheep)).